We begin with the raw amino-acid sequence, 110 residues long: Small EDRK-rich factor 1 (110 aa).

Basic and acidic residues predominate over residues 1-30 (MARGNQRELARQKNMKKTQEISKGKRKEDS). A disordered region spans residues 1–61 (MARGNQRELA…GPHLPLKAPR (61 aa)). Residues 11 to 17 (RQKNMKK) are required for SNCA binding. Residues 34 to 50 (SQRKQSSGGQKSESKMS) show a composition bias toward low complexity.

The protein belongs to the SERF family. Interacts with SNCA; this interaction promotes the aggregation of SNCA. In terms of tissue distribution, isoform Long is predominantly expressed in heart, brain and skeletal muscle. Isoform Short and Isoform Long are expressed throughout the central nervous system, including spinal cord.

Its subcellular location is the cytoplasm. It is found in the cytosol. The protein localises to the nucleus. Functionally, positive regulator of amyloid protein aggregation and proteotoxicity. Induces conformational changes in amyloid proteins, such as APP, HTT, and SNCA, driving them into compact formations preceding the formation of aggregates. The protein is Small EDRK-rich factor 1 (SERF1A) of Homo sapiens (Human).